Here is a 36-residue protein sequence, read N- to C-terminus: MSDINATRLPGAYPPVPMPCVGDADNFTLTRGENLC.

Residues 1 to 10 (MSDINATRLP) constitute a propeptide that is removed on maturation. Residues 11 to 19 (GAYPPVPMP) constitute a cross-link (cyclopeptide (Gly-Pro)). Residues 20–36 (CVGDADNFTLTRGENLC) constitute a propeptide that is removed on maturation.

This sequence belongs to the MSDIN fungal toxin family. Processed by the macrocyclase-peptidase enzyme POPB to yield a toxic cyclic nonapeptide. POPB first removes 10 residues from the N-terminus. Conformational trapping of the remaining peptide forces the enzyme to release this intermediate rather than proceed to macrocyclization. The enzyme rebinds the remaining peptide in a different conformation and catalyzes macrocyclization of the N-terminal 9 residues.

In terms of biological role, probable toxin that belongs to the MSDIN-like toxin family responsible for a large number of food poisoning cases and deaths. This chain is MSDIN-like toxin proprotein 10, found in Amanita bisporigera (Destroying angel).